Reading from the N-terminus, the 182-residue chain is NADH-ubiquinone oxidoreductase 20 kDa subunit (182 aa).

[4Fe-4S] cluster is bound by residues Cys57, Cys58, Cys122, and Cys152.

Belongs to the complex I 20 kDa subunit family. It depends on [4Fe-4S] cluster as a cofactor.

The protein resides in the mitochondrion. The catalysed reaction is a ubiquinone + NADH + 5 H(+)(in) = a ubiquinol + NAD(+) + 4 H(+)(out). The protein is NADH-ubiquinone oxidoreductase 20 kDa subunit (NAD10) of Reclinomonas americana.